A 726-amino-acid chain; its full sequence is Biotin--protein ligase (726 aa).

Positions 28-98 (EVKDQVSNKQ…SDRGGGPVEH (71 aa)) are disordered. A compositionally biased stretch (basic and acidic residues) spans 43-75 (PKPEPSLEIKPEQDGMEHVGRDDPKALGEEPKQ). Residues S147 and S299 each carry the phosphoserine modification. A BPL/LPL catalytic domain is found at 463-652 (KQLGKVILFA…VLEKLIKEFQ (190 aa)).

The protein belongs to the biotin--protein ligase family. Monomer. As to expression, widely expressed. Mostly expressed in muscle, placenta and to a lower extent in the brain, kidney, pancreas, liver and lung.

Its subcellular location is the cytoplasm. The protein resides in the mitochondrion. The catalysed reaction is apo-[methylmalonyl-CoA:pyruvate carboxytransferase] + biotin + ATP = holo-[methylmalonyl-CoA:pyruvate carboxytransferase] + AMP + diphosphate + H(+). It catalyses the reaction apo-[propionyl-CoA:carbon-dioxide ligase (ADP-forming)] + biotin + ATP = holo-[propionyl-CoA:carbon-dioxide ligase (ADP-forming)] + AMP + diphosphate + H(+). The enzyme catalyses apo-[3-methylcrotonoyl-CoA:carbon-dioxide ligase (ADP-forming)] + biotin + ATP = holo-[3-methylcrotonoyl-CoA:carbon-dioxide ligase (ADP-forming)] + AMP + diphosphate + H(+). It carries out the reaction biotin + L-lysyl-[protein] + ATP = N(6)-biotinyl-L-lysyl-[protein] + AMP + diphosphate + H(+). In terms of biological role, biotin--protein ligase catalyzing the biotinylation of the 4 biotin-dependent carboxylases acetyl-CoA-carboxylase, pyruvate carboxylase, propionyl-CoA carboxylase, and methylcrotonyl-CoA carboxylase. The protein is Biotin--protein ligase of Homo sapiens (Human).